Consider the following 662-residue polypeptide: Polyunsaturated fatty acid (12S)/(13S)-lipoxygenase, epidermal-type (662 aa).

The PLAT domain maps to 2 to 114 (VKYKILVATG…TICLTEGTAL (113 aa)). One can recognise a Lipoxygenase domain in the interval 115 to 662 (KVTDDTQNLF…PSLVENSVTI (548 aa)). The Fe cation site is built by histidine 360, histidine 365, histidine 540, and isoleucine 662.

Belongs to the lipoxygenase family. The cofactor is Fe cation. As to expression, expressed in epidermis.

It localises to the cytoplasm. It catalyses the reaction (5Z,8Z,11Z,14Z)-eicosatetraenoate + O2 = (12S)-hydroperoxy-(5Z,8Z,10E,14Z)-eicosatetraenoate. The enzyme catalyses 1-O-methyl-(9Z,12Z)-octadecadienoate + O2 = 1-O-methyl-(13S)-hydroperoxy-(9Z,11E)-octadecadienoate. It carries out the reaction (8Z,11Z,14Z)-eicosatrienoate + O2 = (12S)-hydroperoxy-(8Z,10E,14Z)-eicosatrienoate. The catalysed reaction is (5Z,8Z,11Z)-eicosatrienoate + O2 = (12S)-hydroperoxy-(5Z,8Z,10E)-eicosatrienoate. It catalyses the reaction 1-O-methyl-(5Z,8Z,11Z,14Z)-eicosatetraenoate + O2 = 1-O-methyl-(12S)-hydroperoxy-(5Z,8Z,10E,14Z)-eicosatetraenoate. The enzyme catalyses (9Z,12Z)-octadecadienoate + O2 = (13S)-hydroperoxy-(9Z,11E)-octadecadienoate. It carries out the reaction (4Z,7Z,10Z,13Z,16Z,19Z)-docosahexaenoate + O2 = (14S)-hydroperoxy-(4Z,7Z,10Z,12E,16Z,19Z)-docosahexaenoate. It functions in the pathway lipid metabolism; hydroperoxy eicosatetraenoic acid biosynthesis. Its activity is regulated as follows. Arachidonate 12-lipoxygenase activity is decreased when the pH decreases from 7.4 to 6.0. Functionally, catalyzes the regio and stereo-specific incorporation of a single molecule of dioxygen into free and esterified polyunsaturated fatty acids generating lipid hydroperoxides that can be further reduced to the corresponding hydroxy species. Shows increasing catalytic activity within the series arachidonic acid &lt; 5,8,11-eicosatrienoic acid &lt; linoleic acid &lt; 8,11,14-eicosatrienoic acid. The polypeptide is Polyunsaturated fatty acid (12S)/(13S)-lipoxygenase, epidermal-type (Mus musculus (Mouse)).